The sequence spans 117 residues: Large ribosomal subunit protein bL20 (117 aa).

It belongs to the bacterial ribosomal protein bL20 family.

Binds directly to 23S ribosomal RNA and is necessary for the in vitro assembly process of the 50S ribosomal subunit. It is not involved in the protein synthesizing functions of that subunit. The chain is Large ribosomal subunit protein bL20 from Nitratidesulfovibrio vulgaris (strain DSM 19637 / Miyazaki F) (Desulfovibrio vulgaris).